A 459-amino-acid chain; its full sequence is Zinc finger transcription factor lin-29 (459 aa).

Residues 1-14 (MDQTVLDSAFNSPV) show a composition bias toward polar residues. The tract at residues 1 to 73 (MDQTVLDSAF…GSTGSTPAHH (73 aa)) is disordered. Residues 16 to 56 (SGIAGTTTGSGSTTHFGVGTNFKVSVRSSSRSTDGTDSTDG) show a composition bias toward low complexity. A compositionally biased stretch (polar residues) spans 57-73 (ANSDNVTGSTGSTPAHH). 5 C2H2-type zinc fingers span residues 151–173 (YKCTQCVKAFANSSYLSQHMRIH), 180–202 (GPCNYCGKKFTQLSHLQQHIRTH), 208–232 (YKCKFTGCDKAFSQLSNLQSHSRCH), 238–260 (FKCNSCYKCFTDEQSLLDHIPKH), and 269–291 (HICPFCGKSYTQQTYLQKHMTKH). Positions 390 to 406 (PGFNMITPLENIQRYNG) are interacts with mab-10. A compositionally biased stretch (low complexity) spans 423 to 444 (VSSTPSSTSSSSAGSSSSQGGV). A disordered region spans residues 423–459 (VSSTPSSTSSSSAGSSSSQGGVFNPQSLINNMKNHSY). Residues 446–459 (NPQSLINNMKNHSY) show a composition bias toward polar residues.

In terms of assembly, interacts (via C-terminus) with transcription cofactor mab-10. In terms of tissue distribution, expressed in lateral hypodermal seam cells (at protein level).

It localises to the nucleus. Its function is as follows. Transcription factor which regulates the expression of various genes, including those involved in cuticle synthesis and maintenance, such as collagens, and in lipid metabolism. Binds to promoter regions of genes, at 5'-[(T/G)TTTTTT(A/T/C/G)]-3' consensus sequences. Heterochronic protein which controls the choice of stage specific cell fates, including at the juvenile to adult transition. Promotes differentiation, together with transcriptional cofactor mab-10, perhaps as part of a transcriptional complex. Required for vulval morphogenesis and egg laying; perhaps by acting in a subset of the lateral seam cells. Involved in the exit of seam cells from the cell cycle. Required for specification of uterine pi-cell fate, acting upstream of lin-12 Notch signaling, perhaps via maintenance of lag-2 expression in the anchor cell (AC). Involved in morphogenesis of the specialized male tail used in mating. Acts cell non-autonomously from the hypodermis to regulate expression of genes in the intestine, including genes involved in lipid metabolism. May regulate vitellogenesis via the mTORC2 signaling mediated pathway, independently of daf-16. May promote nuclear accumulation of mab-10 in seam cells post-transcriptionally. Dispensable for seam cell fusion. In terms of biological role, required for seam cell fusion. The protein is Zinc finger transcription factor lin-29 of Caenorhabditis elegans.